A 161-amino-acid chain; its full sequence is Cyclic pyranopterin monophosphate synthase (161 aa).

Substrate is bound by residues Leu75–His77 and Met113–Glu114. Asp128 is an active-site residue.

Belongs to the MoaC family. Homohexamer; trimer of dimers.

It carries out the reaction (8S)-3',8-cyclo-7,8-dihydroguanosine 5'-triphosphate = cyclic pyranopterin phosphate + diphosphate. Its pathway is cofactor biosynthesis; molybdopterin biosynthesis. Catalyzes the conversion of (8S)-3',8-cyclo-7,8-dihydroguanosine 5'-triphosphate to cyclic pyranopterin monophosphate (cPMP). This Escherichia coli O9:H4 (strain HS) protein is Cyclic pyranopterin monophosphate synthase.